We begin with the raw amino-acid sequence, 242 residues long: NLP effector protein 8 (242 aa).

A signal peptide spans 1-17; that stretch reads MHLTVFYLVALCTFASA. The short motif at 108 to 118 is the Conserved undecapeptide motif element; sequence AIMYAWYFPRD. Positions 127-133 match the Conserved heptapeptide motif motif; it reads GHRNAWE. The N-linked (GlcNAc...) asparagine glycan is linked to Asn-206.

It belongs to the Necrosis inducing protein (NPP1) family.

Its subcellular location is the secreted. In terms of biological role, probable secreted effector that may act as a pathogen-associated molecular pattern (PAMP) recognized by the plant immune system. The polypeptide is NLP effector protein 8 (Plasmopara viticola (Downy mildew of grapevine)).